The following is a 351-amino-acid chain: Protein Wnt-4 (351 aa).

The first 22 residues, 1 to 22 (MSPEYFLRSLLLIILATFSANA), serve as a signal peptide directing secretion. 2 N-linked (GlcNAc...) asparagine glycosylation sites follow: Asn-21 and Asn-88. Disulfide bonds link Cys-78–Cys-89, Cys-128–Cys-136, Cys-138–Cys-155, Cys-206–Cys-220, Cys-208–Cys-215, Cys-280–Cys-311, Cys-296–Cys-306, Cys-310–Cys-350, Cys-326–Cys-341, Cys-328–Cys-338, and Cys-333–Cys-334. Ser-212 carries O-palmitoleoyl serine; by PORCN lipidation. N-linked (GlcNAc...) asparagine glycosylation is present at Asn-297.

This sequence belongs to the Wnt family. In terms of assembly, interacts with CPZ. In terms of processing, palmitoleoylation is required for efficient binding to frizzled receptors. Depalmitoleoylation leads to Wnt signaling pathway inhibition. In terms of tissue distribution, predominantly expressed in the diencephalon neuromere D2.

It is found in the secreted. Its subcellular location is the extracellular space. The protein resides in the extracellular matrix. Ligand for members of the frizzled family of seven transmembrane receptors. Plays an important role in embryonic development. The protein is Protein Wnt-4 (WNT4) of Gallus gallus (Chicken).